Here is a 305-residue protein sequence, read N- to C-terminus: Mitochondrial brown fat uncoupling protein 1 (305 aa).

Topologically, residues methionine 1–proline 10 are mitochondrial intermembrane. A helical membrane pass occupies residues proline 11–phenylalanine 32. 3 Solcar repeats span residues proline 11–phenylalanine 102, alanine 109–alanine 199, and aspartate 208–glutamate 293. Residues proline 33–lysine 73 lie on the Mitochondrial matrix side of the membrane. Fatty acid 16:0 is bound at residue lysine 56. Residues leucine 74–tyrosine 96 traverse the membrane as a helical segment. Residues aspartate 97–lysine 114 lie on the Mitochondrial intermembrane side of the membrane. Residues isoleucine 115 to proline 131 traverse the membrane as a helical segment. Residues threonine 132–threonine 176 lie on the Mitochondrial matrix side of the membrane. Residues proline 177–tyrosine 193 form a helical membrane-spanning segment. Residues aspartate 194 to valine 210 lie on the Mitochondrial intermembrane side of the membrane. Residues proline 211–proline 230 form a helical membrane-spanning segment. At valine 231–alanine 264 the chain is on the mitochondrial matrix side. Cysteine sulfenic acid (-SOH) is present on cysteine 252. A helical transmembrane segment spans residues phenylalanine 265–phenylalanine 287. Lysine 267 contributes to the fatty acid 16:0 binding site. Residues glutamate 288–threonine 305 are Mitochondrial intermembrane-facing.

The protein belongs to the mitochondrial carrier (TC 2.A.29) family. In terms of assembly, most probably functions as a monomer. Binds one purine nucleotide per monomer. However, has also been suggested to function as a homodimer or a homotetramer. Tightly associates with cardiolipin in the mitochondrion inner membrane; may stabilize and regulate its activity. Post-translationally, may undergo sulfenylation upon cold exposure. May increase the sensitivity of UCP1 thermogenic function to the activation by noradrenaline probably through structural effects. In terms of processing, may undergo ubiquitin-mediated proteasomal degradation.

It localises to the mitochondrion inner membrane. The catalysed reaction is H(+)(in) = H(+)(out). With respect to regulation, has no constitutive proton transporter activity and has to be activated by long-chain fatty acids/LCFAs. Inhibited by purine nucleotides. Both purine nucleotides and LCFAs bind the cytosolic side of the transporter and directly compete to activate or inhibit it. Activated by noradrenaline and reactive oxygen species. Despite lacking canonical translational encoding for selenocysteine, a small pool of the protein has been observed to selectively incorporate selenocysteine at 'Cys-252'. Selenocysteine-modified protein is highly sensitive to redox modification and may constitute a pool of protein highly sensitive to activation by elevated levels of reactive oxygen species (ROS). Its function is as follows. Mitochondrial protein responsible for thermogenic respiration, a specialized capacity of brown adipose tissue and beige fat that participates in non-shivering adaptive thermogenesis to temperature and diet variations and more generally to the regulation of energy balance. Functions as a long-chain fatty acid/LCFA and proton symporter, simultaneously transporting one LCFA and one proton through the inner mitochondrial membrane. However, LCFAs remaining associated with the transporter via their hydrophobic tails, it results in an apparent transport of protons activated by LCFAs. Thereby, dissipates the mitochondrial proton gradient and converts the energy of substrate oxydation into heat instead of ATP. Regulates the production of reactive oxygen species/ROS by mitochondria. The polypeptide is Mitochondrial brown fat uncoupling protein 1 (Ovis aries (Sheep)).